We begin with the raw amino-acid sequence, 259 residues long: MRSATKLFKNLSKSVVQLKTVKPVSSLNFGYIKTRQFSTSTTDSSNLFLNNNNQFQNFTFPTKQQIRIRKPAPAFKGQAVVNGEFKEISLDDYKGKYLYLFFYPLDFTFVCPTEIIAFSNAAEEFKKAGCELVGCSIDSPFTHLAWINTPRKEGGLGGINIPLLSDLTHQISKDYGVYIEEDGHTIRGSILIDKEGLVRVITMNDNPVGRSVDEAIRTLKALKFTDQFGEVCPANWSEGDKSMKADPKGSKEYFEAVNK.

One can recognise a Thioredoxin domain in the interval 66–224; that stretch reads IRIRKPAPAF…AIRTLKALKF (159 aa). Residue Cys-111 is the Cysteine sulfenic acid (-SOH) intermediate of the active site.

It belongs to the peroxiredoxin family. AhpC/Prx1 subfamily. In terms of assembly, homodimer; disulfide-linked, upon oxidation. 5 homodimers assemble to form a ring-like decamer.

It is found in the cytoplasm. The protein localises to the endoplasmic reticulum. The enzyme catalyses a hydroperoxide + [thioredoxin]-dithiol = an alcohol + [thioredoxin]-disulfide + H2O. Thiol-specific peroxidase that catalyzes the reduction of hydrogen peroxide and organic hydroperoxides to water and alcohols, respectively. Plays a role in cell protection against oxidative stress by detoxifying peroxides and as sensor of hydrogen peroxide-mediated signaling events. Regulates the activation of NF-kappa-B in the cytosol by a modulation of I-kappa-B-alpha phosphorylation. The chain is Peroxiredoxin-4 (prdx4) from Dictyostelium discoideum (Social amoeba).